Consider the following 702-residue polypeptide: Cadmium, zinc and cobalt-transporting ATPase (702 aa).

Residues 1 to 86 (MRLVKQEYVL…HIKKSADDGY (86 aa)) lie on the Cytoplasmic side of the membrane. One can recognise an HMA domain in the interval 4 to 72 (VKQEYVLDGL…KVKSIDPHVT (69 aa)). Residues C15 and C18 each contribute to the Cd(2+) site. 2 residues coordinate Co(2+): C15 and C18. Residues C15 and C18 each coordinate Zn(2+). Residues 87 to 107 (RNRMVNMLIRMAAAVILGAAA) form a helical membrane-spanning segment. At 108–116 (YLVQSGTIE) the chain is on the extracellular side. Residues 117–136 (FFLFLGAYLIIGGDIIIRAV) traverse the membrane as a helical segment. The Cytoplasmic segment spans residues 137-143 (KNIIRGQ). Residues 144–163 (VFDEHFLMALATIGAFLIQQ) traverse the membrane as a helical segment. Topologically, residues 164–166 (YPE) are extracellular. A helical membrane pass occupies residues 167-186 (GVAVMLFYQIGELFQGAAVS). Residues 187–320 (RSRKSISALM…ITKFAKYYTP (134 aa)) are Cytoplasmic-facing. The helical transmembrane segment at 321–339 (AVVIIAVLLAFVPPLVLSG) threads the bilayer. At 340–345 (AALSDW) the chain is on the extracellular side. Residues 346–363 (VYRALIFLVISCPCALVV) form a helical membrane-spanning segment. The Cytoplasmic portion of the chain corresponds to 364-648 (SIPLGFFGGI…AIRIAKRTRR (285 aa)). Residue D401 is the 4-aspartylphosphate intermediate of the active site. Residues D595 and D599 each contribute to the Mg(2+) site. The chain crosses the membrane as a helical span at residues 649–670 (IVWQNIGFALGVKAIFLILGAF). The Extracellular portion of the chain corresponds to 671–678 (GIATMWEA). The chain crosses the membrane as a helical span at residues 679-694 (VFSDVGVTLLAVANAM). Residues 695–702 (RVMRLKNK) are Cytoplasmic-facing.

Belongs to the cation transport ATPase (P-type) (TC 3.A.3) family. Type IB subfamily.

It localises to the cell membrane. It catalyses the reaction Zn(2+)(in) + ATP + H2O = Zn(2+)(out) + ADP + phosphate + H(+). The enzyme catalyses Cd(2+)(in) + ATP + H2O = Cd(2+)(out) + ADP + phosphate + H(+). In terms of biological role, couples the hydrolysis of ATP with the transport of cadmium, zinc and cobalt out of the cell. Does not seem to transport copper. The protein is Cadmium, zinc and cobalt-transporting ATPase (cadA) of Bacillus subtilis (strain 168).